The following is a 347-amino-acid chain: Circulating cathodic antigen (347 aa).

A coiled-coil region spans residues 76–109 (ICLAAENKQLEQLKIENKTLRNSLDEHQTALDMI). The disordered stretch occupies residues 149 to 177 (PGPKSVNTPSTNSIDSQSVSQKSNSGKVD). A compositionally biased stretch (polar residues) spans 153-174 (SVNTPSTNSIDSQSVSQKSNSG). Positions 206–233 (DAYATELEEELHRLRSENAGLREILMIS) form a coiled coil. The interval 303-332 (LYNIPNPSDDSSNSGTISGNHSDEDSDEDD) is disordered. Positions 307-316 (PNPSDDSSNS) are enriched in low complexity.

This sequence belongs to the SIKE family. O-glycosylated.

Functionally, involved in protection of the schistosome gut. The sequence is that of Circulating cathodic antigen from Schistosoma mansoni (Blood fluke).